Consider the following 419-residue polypeptide: Pygopus homolog 1 (419 aa).

2 disordered regions span residues 1 to 64 (MPAE…PNSD) and 175 to 338 (HFRQ…SSSD). Gly residues predominate over residues 18 to 30 (GDSGLDGLGGPGV). The Nuclear localization signal signature appears at 35-41 (PDKKKRK). Polar residues-rich tracts occupy residues 175-221 (HFRQ…SNHS) and 240-255 (DFTQGATKNTNQNSSA). A compositionally biased stretch (low complexity) spans 276–286 (VNRNNAVNQEN). Polar residues predominate over residues 287–307 (SRSSSTEATNNNPANGTQNKP). A PHD-type zinc finger spans residues 340 to 398 (VYPCGICTNEVNDDQDAILCEASCQKWFHRICTGMTETAYGLLTAEASAVWGCDTCMAD). The segment at 341–388 (YPCGICTNEVNDDQDAILCEASCQKWFHRICTGMTETAYGLLTAEASA) is interaction with H3K4me2. The tract at residues 373–391 (GMTETAYGLLTAEASAVWG) is interaction with BCL9.

As to quaternary structure, interacts with BCL9 via The PHD-type zinc finger motiv, and thereby becomes part of the nuclear beta-catenin/TCF complex. Identified in a complex with BCL9L, CDC73, CTNNB1 and PYGO1. Interacts with histone H3 mono-, di- or tri-methylated at 'Lys4' (H3K4me1, H3K4me2, H3K4me3); the interaction is enhanced by the interaction with BCL9.

It localises to the nucleus. Functionally, involved in signal transduction through the Wnt pathway. This chain is Pygopus homolog 1 (PYGO1), found in Homo sapiens (Human).